Here is a 723-residue protein sequence, read N- to C-terminus: Cyclin-T2 (723 aa).

The interval 1–298 (MASGRGASSR…SVTGVPANPS (298 aa)) is interaction with MDFIC and MDFI. One can recognise a Cyclin N-terminal domain in the interval 12–147 (FFTREQLENT…IMLQTLGFEI (136 aa)). The tract at residues 250–298 (RLKRIRNWRAMAKKPKVDGQVSETPLLGSSLVQNSILVDSVTGVPANPS) is interaction with POLR2A. Polar residues-rich tracts occupy residues 297 to 307 (PSFQKPSTSTF) and 314 to 325 (NSGSTSVQDSRA). Disordered stretches follow at residues 297–325 (PSFQKPSTSTFPAPIPLNSGSTSVQDSRA), 340–364 (SYSLSSHQEWPQHPDSARTDPVYTQ), 385–428 (ALHS…GMLP), and 458–645 (AEQQ…SSVK). Residues 395 to 409 (DKVADHSSAKQEYTH) are compositionally biased toward basic and acidic residues. Lys404 is covalently cross-linked (Glycyl lysine isopeptide (Lys-Gly) (interchain with G-Cter in SUMO2)). Ser477 carries the phosphoserine modification. Basic and acidic residues-rich tracts occupy residues 489 to 503 (DRPEKHVAEKKERSG), 517 to 543 (GPSKEELKMKIKVASSERHSSSDEGSG), and 552 to 565 (ISRDHKEKHKEHPA). Over residues 566-576 (NRHHSSHKYLH) the composition is skewed to basic residues. A Phosphoserine modification is found at Ser596. A compositionally biased stretch (low complexity) spans 631 to 645 (SSKSAGSSSSSSSVK).

Belongs to the cyclin family. Cyclin C subfamily. Interacts with CDK9 to form P-TEFb. Interacts with POLR2A (via the C-terminal domain (CTD)); mediates transcriptional activity. Interacts with HEXIM1; mediates formation of a tripartite complex with KPNA2. Interacts with HEXIM2. Interacts with PKN1; enhances MYOD1-dependent transcription. P-TEFB complex interacts with RB1; promotes phosphorylation of RB1. P-TEFB complex interacts with MYOD1; promotes the transcriptional activity of MYOD1 through its CDK9-mediated phosphorylation. Interacts with MDFI and MDFIC. In terms of tissue distribution, highly expressed in all phases of skeletal muscle differentiation, particularly in later stages. Highly expressed in skeletal muscle. Significantly expressed in heart, brain, kidney, liver, testis, and pancreas.

It is found in the cytoplasm. Its subcellular location is the perinuclear region. The protein resides in the nucleus. Functionally, regulatory subunit of the cyclin-dependent kinase pair (CDK9/cyclin T) complex, also called positive transcription elongation factor B (P-TEFB), which is proposed to facilitate the transition from abortive to production elongation by phosphorylating the CTD (carboxy-terminal domain) of the large subunit of RNA polymerase II (RNAP II). The activity of this complex is regulated by binding with 7SK snRNA. Plays a role during muscle differentiation; P-TEFB complex interacts with MYOD1; this tripartite complex promotes the transcriptional activity of MYOD1 through its CDK9-mediated phosphorylation and binds the chromatin of promoters and enhancers of muscle-specific genes; this event correlates with hyperphosphorylation of the CTD domain of RNA pol II. In addition, enhances MYOD1-dependent transcription through interaction with PKN1. Involved in early embryo development. In Mus musculus (Mouse), this protein is Cyclin-T2.